An 819-amino-acid chain; its full sequence is Protein EFR3 homolog A (819 aa).

Ser360, Ser363, Ser420, and Ser692 each carry phosphoserine.

This sequence belongs to the EFR3 family. As to quaternary structure, component of a phosphatidylinositol 4-kinase (PI4K) complex, composed of PI4KA, EFR3 (EFR3A or EFR3B), TTC7 (TTC7A or TTC7B) and HYCC (HYCC1 or HYCC2). Post-translationally, palmitoylated at its N-terminus, anchoring the protein to the plasma membrane. Widely expressed. Expressed in neurons of the superior olivary complex of the auditory brainstem. Also expressed at lower levels in the cochlear nucleus, the lateral leminiscal nuclei and the inferior collicus.

It is found in the cell membrane. The protein resides in the cytoplasm. It localises to the cytosol. Component of a complex required to localize phosphatidylinositol 4-kinase (PI4K) to the plasma membrane. The complex acts as a regulator of phosphatidylinositol 4-phosphate (PtdIns(4)P) synthesis. In the complex, EFR3A probably acts as the membrane-anchoring component. Also involved in responsiveness to G-protein-coupled receptors; it is however unclear whether this role is direct or indirect. This Mus musculus (Mouse) protein is Protein EFR3 homolog A.